The primary structure comprises 393 residues: Formate-dependent phosphoribosylglycinamide formyltransferase (393 aa).

Residues 22–23 and Glu82 each bind N(1)-(5-phospho-beta-D-ribosyl)glycinamide; that span reads EL. ATP contacts are provided by residues Arg114, Lys155, 160-165, 195-198, and Glu203; these read SSGKGQ and EGLV. One can recognise an ATP-grasp domain in the interval 119 to 308; that stretch reads RLAAETLQLP…EFALHVRAFL (190 aa). 2 residues coordinate Mg(2+): Glu267 and Glu279. Residues Asp286, Lys355, and 362-363 each bind N(1)-(5-phospho-beta-D-ribosyl)glycinamide; that span reads RR.

This sequence belongs to the PurK/PurT family. In terms of assembly, homodimer.

The enzyme catalyses N(1)-(5-phospho-beta-D-ribosyl)glycinamide + formate + ATP = N(2)-formyl-N(1)-(5-phospho-beta-D-ribosyl)glycinamide + ADP + phosphate + H(+). The protein operates within purine metabolism; IMP biosynthesis via de novo pathway; N(2)-formyl-N(1)-(5-phospho-D-ribosyl)glycinamide from N(1)-(5-phospho-D-ribosyl)glycinamide (formate route): step 1/1. In terms of biological role, involved in the de novo purine biosynthesis. Catalyzes the transfer of formate to 5-phospho-ribosyl-glycinamide (GAR), producing 5-phospho-ribosyl-N-formylglycinamide (FGAR). Formate is provided by PurU via hydrolysis of 10-formyl-tetrahydrofolate. The protein is Formate-dependent phosphoribosylglycinamide formyltransferase of Yersinia pseudotuberculosis serotype IB (strain PB1/+).